A 181-amino-acid polypeptide reads, in one-letter code: Interleukin-24 (181 aa).

The N-terminal stretch at 1–26 (MSWGLQILPCLSLILLLWNQVPGLEG) is a signal peptide. C34 and C81 form a disulfide bridge. N-linked (GlcNAc...) asparagine glycosylation is present at N74. Residue K97 forms a Glycyl lysine isopeptide (Lys-Gly) (interchain with G-Cter in ubiquitin) linkage.

It belongs to the IL-10 family. Post-translationally, glycosylated. In terms of processing, ubiquitination at Lys-97 promotes proteasomal degradation. As to expression, selectively expressed by Th2 cells. Expressed in the liver.

It localises to the secreted. Functionally, multifunctional cytokine mainly produced by T-cells that plays a regulatory role in immune response, tissue homeostasis, host defense, and oncogenesis. Possesses antiviral functions and induces the type I interferon response during influenza infection. Signals through two receptor complexes IL20RA/IL20RB or IL20RB/IL22RA1. In turn, stimulates the JAK1-STAT3 and MAPK pathways and promotes the secretion of pro-inflammatory mediators including IL8 and MMP1. Intracellularly, maintains endoplasmic reticulum homeostasis by restricting the eIF2alpha-CHOP pathway-mediated stress signal. In addition, acts as a quality control mechanism for the ubiquitin proteasome system by alerting the cell to proteasome dysfunction through activation of PKR/EIF2AK2. In Mus musculus (Mouse), this protein is Interleukin-24 (Il24).